Here is a 1817-residue protein sequence, read N- to C-terminus: Nuclear pore complex protein Nup98-Nup96 (1817 aa).

An FG repeats 1 region spans residues 1-156 (MFNKSFGTPF…LFGPSSFTAA (156 aa)). The tract at residues 157 to 213 (PTGTTIKFNPPTGTDTMVKAGVSTNISTKHQCITAMKEYESKSLEELRLEDYQANRK) is GLEBS; interaction with RAE1. Residues 214 to 480 (GPQNQVGAGT…NTTTATLGFG (267 aa)) are FG repeats 2. The interval 512 to 535 (PFGDSPLFRNPMSDPKKKEERLKP) is disordered. S524 is modified (phosphoserine). Residues 525 to 534 (DPKKKEERLK) are compositionally biased toward basic and acidic residues. K563 participates in a covalent cross-link: Glycyl lysine isopeptide (Lys-Gly) (interchain with G-Cter in SUMO2). N6-acetyllysine; alternate is present on K603. K603 is covalently cross-linked (Glycyl lysine isopeptide (Lys-Gly) (interchain with G-Cter in SUMO2); alternate). Phosphoserine occurs at positions 608, 612, 618, 623, 625, and 653. The segment at 614-633 (VNRDSENLASPSEYPENGER) is disordered. The tract at residues 662 to 682 (PIAKPIPQTPESAGNKHSNSN) is disordered. Residue K665 forms a Glycyl lysine isopeptide (Lys-Gly) (interchain with G-Cter in SUMO2) linkage. A Phosphothreonine modification is found at T670. Polar residues predominate over residues 670–682 (TPESAGNKHSNSN). S673, S681, S683, and S839 each carry phosphoserine. Residues 738–880 (KVGYYTIPSM…GSWVFKVSHF (143 aa)) form the Peptidase S59 domain. S881 (nucleophile) is an active-site residue. The tract at residues 886 to 937 (QDSDEEEEEHPSKTSTKKLKTAPLPPASQTTPLQMALNGKPAPPPQSQSPEV) is disordered. Residues S888, S897, and S934 each carry the phosphoserine modification. A Phosphothreonine modification is found at T1000. Residues S1023, S1028, S1043, S1060, and S1064 each carry the phosphoserine modification. A Phosphothreonine modification is found at T1070. Position 1329 is a phosphoserine (S1329). T1772 carries the phosphothreonine modification.

This sequence belongs to the nucleoporin GLFG family. As to quaternary structure, part of the nuclear pore complex (NPC). Interacts directly with NUP96. Part of the Nup160 subcomplex in the nuclear pore which is composed of NUP160, NUP133, NUP107 and NUP96; this complex plays a role in RNA export and in tethering NUP98 and NUP153 to the nucleus. Interacts with RAE1. Does not interact with TPR. Interacts with NUP88. Interacts directly with NUP88 and NUP214, subunits of the cytoplasmic filaments of the NPC. Interacts (via N-terminus) with DHX9 (via DRBM, OB-fold and RGG domains); this interaction occurs in a RNA-dependent manner and stimulates DHX9-mediated ATPase activity. (Microbial infection) Interacts with HIV-1 capsid protein P24 and nucleocapsid protein P7 (in vitro); the interaction may promote the integration of the virus in the host nucleus (in vitro). In terms of assembly, (Microbial infection) Interacts with vesicular stomatitis virus protein M. As to quaternary structure, (Microbial infection) Interacts with SARS coronavirus-2/SARS-CoV-2 ORF6 protein; the interaction blocks STAT1 nuclear translocation, antagonizes interferon signaling and blocks mRNA nuclear export (ex vivo). (Microbial infection) Interacts with SARS coronavirus/SARS-CoV ORF6 protein. Isoform 1 to isoform 4 are autoproteolytically cleaved to yield Nup98 and Nup96 or Nup98 only, respectively. Cleaved Nup98 is necessary for the targeting of Nup98 to the nuclear pore and the interaction with Nup96. In terms of processing, proteolytically degraded after poliovirus (PV) infection; degradation is partial and NCP- and TPR-binding domains withstand degradation.

It is found in the nucleus membrane. Its subcellular location is the nucleus. The protein localises to the nuclear pore complex. It localises to the nucleoplasm. Plays a role in the nuclear pore complex (NPC) assembly and/or maintenance. NUP98 and NUP96 are involved in the bidirectional transport across the NPC. May anchor NUP153 and TPR to the NPC. In cooperation with DHX9, plays a role in transcription and alternative splicing activation of a subset of genes. Involved in the localization of DHX9 in discrete intranuclear foci (GLFG-body). Its function is as follows. (Microbial infection) Interacts with HIV-1 capsid protein P24 and nucleocapsid protein P7 and may thereby promote the integration of the virus in the host nucleus (in vitro). Binding affinity to HIV-1 CA-NC complexes bearing the capsid change Asn-74-Asp is reduced (in vitro). The protein is Nuclear pore complex protein Nup98-Nup96 of Homo sapiens (Human).